Consider the following 134-residue polypeptide: UPF0412 protein YaaI (134 aa).

Positions 1–23 are cleaved as a signal peptide; sequence MRSVLTISVGLLFGLALSSVAHA.

Belongs to the UPF0412 family.

This chain is UPF0412 protein YaaI, found in Salmonella paratyphi A (strain ATCC 9150 / SARB42).